The following is a 149-amino-acid chain: Small ribosomal subunit protein uS13 (149 aa).

Belongs to the universal ribosomal protein uS13 family. As to quaternary structure, part of the 30S ribosomal subunit. Forms a loose heterodimer with protein S19. Forms two bridges to the 50S subunit in the 70S ribosome.

In terms of biological role, located at the top of the head of the 30S subunit, it contacts several helices of the 16S rRNA. In the 70S ribosome it contacts the 23S rRNA (bridge B1a) and protein L5 of the 50S subunit (bridge B1b), connecting the 2 subunits; these bridges are implicated in subunit movement. The chain is Small ribosomal subunit protein uS13 from Methanococcus maripaludis (strain DSM 14266 / JCM 13030 / NBRC 101832 / S2 / LL).